The following is a 123-amino-acid chain: Ribosome-binding factor A (123 aa).

This sequence belongs to the RbfA family. In terms of assembly, monomer. Binds 30S ribosomal subunits, but not 50S ribosomal subunits or 70S ribosomes.

It localises to the cytoplasm. Functionally, one of several proteins that assist in the late maturation steps of the functional core of the 30S ribosomal subunit. Associates with free 30S ribosomal subunits (but not with 30S subunits that are part of 70S ribosomes or polysomes). Required for efficient processing of 16S rRNA. May interact with the 5'-terminal helix region of 16S rRNA. This chain is Ribosome-binding factor A, found in Geotalea daltonii (strain DSM 22248 / JCM 15807 / FRC-32) (Geobacter daltonii).